Here is a 310-residue protein sequence, read N- to C-terminus: Tryptophan 2,3-dioxygenase (310 aa).

The segment at Met1 to Pro36 is disordered. Positions Ser15–Pro36 are enriched in low complexity. Residues Phe79–His83, Tyr141, and Arg145 each bind substrate. Residue His268 coordinates heme. Substrate is bound at residue Thr282.

It belongs to the tryptophan 2,3-dioxygenase family. In terms of assembly, homotetramer. Heme serves as cofactor.

The catalysed reaction is L-tryptophan + O2 = N-formyl-L-kynurenine. It participates in amino-acid degradation; L-tryptophan degradation via kynurenine pathway; L-kynurenine from L-tryptophan: step 1/2. In terms of biological role, heme-dependent dioxygenase that catalyzes the oxidative cleavage of the L-tryptophan (L-Trp) pyrrole ring and converts L-tryptophan to N-formyl-L-kynurenine. Catalyzes the oxidative cleavage of the indole moiety. This chain is Tryptophan 2,3-dioxygenase, found in Burkholderia lata (strain ATCC 17760 / DSM 23089 / LMG 22485 / NCIMB 9086 / R18194 / 383).